A 325-amino-acid polypeptide reads, in one-letter code: NADH-quinone oxidoreductase subunit H (325 aa).

8 helical membrane-spanning segments follow: residues Ile-11 to Phe-31, Val-81 to Val-101, Ile-114 to Gly-134, Ala-149 to Ala-169, Met-186 to Val-206, Phe-237 to Phe-257, Leu-265 to Ile-285, and Val-304 to Ala-324.

The protein belongs to the complex I subunit 1 family. In terms of assembly, NDH-1 is composed of 13 different subunits. Subunits NuoA, H, J, K, L, M, N constitute the membrane sector of the complex.

The protein localises to the cell inner membrane. The enzyme catalyses a quinone + NADH + 5 H(+)(in) = a quinol + NAD(+) + 4 H(+)(out). Functionally, NDH-1 shuttles electrons from NADH, via FMN and iron-sulfur (Fe-S) centers, to quinones in the respiratory chain. The immediate electron acceptor for the enzyme in this species is believed to be ubiquinone. Couples the redox reaction to proton translocation (for every two electrons transferred, four hydrogen ions are translocated across the cytoplasmic membrane), and thus conserves the redox energy in a proton gradient. This subunit may bind ubiquinone. The sequence is that of NADH-quinone oxidoreductase subunit H from Serratia proteamaculans (strain 568).